The sequence spans 480 residues: Proline--tRNA ligase (480 aa).

The protein belongs to the class-II aminoacyl-tRNA synthetase family. ProS type 3 subfamily. Homodimer.

It is found in the cytoplasm. It carries out the reaction tRNA(Pro) + L-proline + ATP = L-prolyl-tRNA(Pro) + AMP + diphosphate. In terms of biological role, catalyzes the attachment of proline to tRNA(Pro) in a two-step reaction: proline is first activated by ATP to form Pro-AMP and then transferred to the acceptor end of tRNA(Pro). The sequence is that of Proline--tRNA ligase from Chloroflexus aggregans (strain MD-66 / DSM 9485).